The following is a 93-amino-acid chain: GWPAYPGPNGIRSSVCQTKLGCGKKNLATKGVCKAFCLGRKRFWQKCGKNGSSGKGSRICNPVLAHAVEKAGKGLIKVTDMAVAAIVKYAGKK.

3 cysteine pairs are disulfide-bonded: cysteine 16/cysteine 37, cysteine 22/cysteine 33, and cysteine 47/cysteine 60.

This sequence belongs to the worm cytolysin family. In terms of tissue distribution, localized within the skin and proboscis and are most readily isolated from body mucus secretions.

The protein resides in the secreted. Its function is as follows. Cytolysin that shows hemolytic activity (on bovine erythrocytes, HC(50)=5.75 mg/ml). This hemolytic activity is completely inhibited by small unilamelar vesicles composed of PC/PG, PC/PI and PC/PS in 1:1 molar ratios (with at least 100 mg/ml concentration). This Parborlasia corrugatus (Antarctic nemertean worm) protein is Parbolysin P4.